The primary structure comprises 286 residues: D-tagatose-1,6-bisphosphate aldolase subunit KbaY (286 aa).

Aspartate 82 (proton donor) is an active-site residue. Zn(2+)-binding residues include histidine 83 and histidine 180. Glycine 181 contacts dihydroxyacetone phosphate. Histidine 208 is a Zn(2+) binding site. Dihydroxyacetone phosphate-binding positions include 209–211 (GAS) and 230–233 (NVAT).

The protein belongs to the class II fructose-bisphosphate aldolase family. TagBP aldolase KbaY subfamily. In terms of assembly, homotetramer. Forms a complex with KbaZ. It depends on Zn(2+) as a cofactor.

It catalyses the reaction D-tagatofuranose 1,6-bisphosphate = D-glyceraldehyde 3-phosphate + dihydroxyacetone phosphate. It functions in the pathway carbohydrate metabolism; D-tagatose 6-phosphate degradation; D-glyceraldehyde 3-phosphate and glycerone phosphate from D-tagatose 6-phosphate: step 2/2. Functionally, catalytic subunit of the tagatose-1,6-bisphosphate aldolase KbaYZ, which catalyzes the reversible aldol condensation of dihydroxyacetone phosphate (DHAP or glycerone-phosphate) with glyceraldehyde 3-phosphate (G3P) to produce tagatose 1,6-bisphosphate (TBP). Requires KbaZ subunit for full activity and stability. In Escherichia coli O17:K52:H18 (strain UMN026 / ExPEC), this protein is D-tagatose-1,6-bisphosphate aldolase subunit KbaY.